The sequence spans 816 residues: uncharacterized protein (816 aa).

Position 503 to 534 (503 to 534 (DTWTVITGGTDGIGKAYIEELCKTRGLKKFYL)) interacts with NADP(+). Ser-641 contributes to the substrate binding site. The active-site Proton acceptor is the Tyr-661. 2 consecutive transmembrane segments (helical) span residues 743-763 (FGFS…SIVL) and 777-797 (VFII…FLLN).

The protein belongs to the short-chain dehydrogenases/reductases (SDR) family.

The protein resides in the membrane. This is an uncharacterized protein from Caenorhabditis elegans.